The sequence spans 380 residues: Cytochrome b (380 aa).

A run of 4 helical transmembrane segments spans residues 34 to 54, 78 to 99, 114 to 134, and 179 to 199; these read FGSL…LLAM, WLIR…YLHI, WNTG…GYVL, and FFAL…IHLT. Heme b is bound by residues H84 and H98. Residues H183 and H197 each contribute to the heme b site. H202 contributes to the a ubiquinone binding site. A run of 4 helical transmembrane segments spans residues 227–247, 289–309, 321–341, and 348–368; these read LKDI…ALFS, LGGV…PFLH, ISQL…WVGS, and FIII…ILFP.

Belongs to the cytochrome b family. As to quaternary structure, the cytochrome bc1 complex contains 11 subunits: 3 respiratory subunits (MT-CYB, CYC1 and UQCRFS1), 2 core proteins (UQCRC1 and UQCRC2) and 6 low-molecular weight proteins (UQCRH/QCR6, UQCRB/QCR7, UQCRQ/QCR8, UQCR10/QCR9, UQCR11/QCR10 and a cleavage product of UQCRFS1). This cytochrome bc1 complex then forms a dimer. The cofactor is heme b.

The protein localises to the mitochondrion inner membrane. In terms of biological role, component of the ubiquinol-cytochrome c reductase complex (complex III or cytochrome b-c1 complex) that is part of the mitochondrial respiratory chain. The b-c1 complex mediates electron transfer from ubiquinol to cytochrome c. Contributes to the generation of a proton gradient across the mitochondrial membrane that is then used for ATP synthesis. This chain is Cytochrome b (MT-CYB), found in Puffinus opisthomelas (Black-vented shearwater).